The primary structure comprises 164 residues: Respiratory growth induced protein 2 (164 aa).

This sequence belongs to the RGI1 family.

Its subcellular location is the cytoplasm. Its function is as follows. Involved in the control of energetic metabolism and significantly contribute to cell fitness, especially under respiratory growth conditions. This Saccharomyces cerevisiae (strain RM11-1a) (Baker's yeast) protein is Respiratory growth induced protein 2 (RGI2).